A 353-amino-acid polypeptide reads, in one-letter code: E3 ubiquitin-protein ligase TRIM63 (353 aa).

An RING-type zinc finger spans residues 23-79 (CPICLEMFTKPVVILPCQHNLCRKCANDIFQAANPYWTSRGSSVSMSGGRFRCPTCR). The tract at residues 74–218 (RCPTCRHEVI…LSQKFDTLYA (145 aa)) is interaction with TTN. Residues 117–159 (GSHPMCKEHEDEKINIYCLTCEVPTCSMCKVFGIHKACEVAPL) form a B box-type zinc finger. The Zn(2+) site is built by Cys122, His125, Cys145, and His151. The stretch at 207–269 (EELSQKFDTL…VETAIQSLDE (63 aa)) forms a coiled coil. Residues 267 to 325 (LDEPGGATFLLTAKQLIKSIVEASKGCQLGKTEQGFENMDFFTLDLEHIADALRAIDFG) enclose the COS domain. Positions 326-344 (TDEEEEEFIEEEDQEEEES) are enriched in acidic residues. The interval 326–353 (TDEEEEEFIEEEDQEEEESTEGKEEGHQ) is disordered.

In terms of assembly, homodimer. Homooligomer and heterooligomer. Interacts with SUMO2, titin/TTN and GMEB1. Interacts with TRIM54 and probably with TRIM55 and TNNI3. Forms a ternary complex with RACK1 and PRKCE. Interacts with CKM. In terms of tissue distribution, muscle specific. Selectively expressed in heart and skeletal muscle. Also expressed in the iris.

The protein resides in the cytoplasm. It localises to the nucleus. The protein localises to the myofibril. Its subcellular location is the sarcomere. It is found in the m line. The protein resides in the z line. The enzyme catalyses S-ubiquitinyl-[E2 ubiquitin-conjugating enzyme]-L-cysteine + [acceptor protein]-L-lysine = [E2 ubiquitin-conjugating enzyme]-L-cysteine + N(6)-ubiquitinyl-[acceptor protein]-L-lysine.. It functions in the pathway protein modification; protein ubiquitination. E3 ubiquitin ligase. Mediates the ubiquitination and subsequent proteasomal degradation of CKM, GMEB1 and HIBADH. Regulates the proteasomal degradation of muscle proteins under amino acid starvation, where muscle protein is catabolized to provide other organs with amino acids. Inhibits de novo skeletal muscle protein synthesis under amino acid starvation. Regulates proteasomal degradation of cardiac troponin I/TNNI3 and probably of other sarcomeric-associated proteins. May play a role in striated muscle atrophy and hypertrophy by regulating an anti-hypertrophic PKC-mediated signaling pathway. May regulate the organization of myofibrils through TTN in muscle cells. The protein is E3 ubiquitin-protein ligase TRIM63 (TRIM63) of Homo sapiens (Human).